The sequence spans 217 residues: Protein TNT (217 aa).

A disordered region spans residues 1–217; that stretch reads MSLVPGQHCS…HSTKQTGGKE (217 aa). 2 stretches are compositionally biased toward polar residues: residues 20–36 and 45–61; these read SPITMGTEPATQNTEFS and TSPQRGHSQHSEASQGP. Composition is skewed to low complexity over residues 91 to 104 and 128 to 139; these read EPSLQSPSLELQSP and QSSESHVSSVQH. 2 stretches are compositionally biased toward polar residues: residues 177 to 191 and 207 to 217; these read RLNTQAASNQTSQLG and AHSTKQTGGKE.

In terms of tissue distribution, preferentially expressed in teratocarcinoma rather than in normal testis.

This Homo sapiens (Human) protein is Protein TNT (C16orf82).